Here is a 550-residue protein sequence, read N- to C-terminus: Methionine--tRNA ligase (550 aa).

Residues 13–23 carry the 'HIGH' region motif; the sequence is PYANGPLHFGH. Cysteine 145, cysteine 148, cysteine 158, and cysteine 161 together coordinate Zn(2+). Positions 331–335 match the 'KMSKS' region motif; that stretch reads QFSKS. Residue lysine 334 coordinates ATP.

The protein belongs to the class-I aminoacyl-tRNA synthetase family. MetG type 1 subfamily. As to quaternary structure, monomer. Zn(2+) is required as a cofactor.

Its subcellular location is the cytoplasm. It carries out the reaction tRNA(Met) + L-methionine + ATP = L-methionyl-tRNA(Met) + AMP + diphosphate. In terms of biological role, is required not only for elongation of protein synthesis but also for the initiation of all mRNA translation through initiator tRNA(fMet) aminoacylation. This chain is Methionine--tRNA ligase, found in Chlamydia trachomatis serovar A (strain ATCC VR-571B / DSM 19440 / HAR-13).